The sequence spans 184 residues: Peptide deformylase (184 aa).

Residues cysteine 111 and histidine 154 each contribute to the Fe cation site. The active site involves glutamate 155. Histidine 158 contributes to the Fe cation binding site.

It belongs to the polypeptide deformylase family. The cofactor is Fe(2+).

The enzyme catalyses N-terminal N-formyl-L-methionyl-[peptide] + H2O = N-terminal L-methionyl-[peptide] + formate. Its function is as follows. Removes the formyl group from the N-terminal Met of newly synthesized proteins. Requires at least a dipeptide for an efficient rate of reaction. N-terminal L-methionine is a prerequisite for activity but the enzyme has broad specificity at other positions. The sequence is that of Peptide deformylase from Lactobacillus helveticus (strain DPC 4571).